We begin with the raw amino-acid sequence, 387 residues long: GTPase Obg (387 aa).

An Obg domain is found at 1–159 (MKFVDEAIIR…RSLKLELLLL (159 aa)). The 174-residue stretch at 160–333 (ADVGLLGMPN…LALKLLDFID (174 aa)) folds into the OBG-type G domain. GTP contacts are provided by residues 166 to 173 (GMPNAGKS), 191 to 195 (FTTLV), 213 to 216 (DIPG), 283 to 286 (NKAD), and 314 to 316 (SAY). Residues Ser173 and Thr193 each coordinate Mg(2+).

It belongs to the TRAFAC class OBG-HflX-like GTPase superfamily. OBG GTPase family. Monomer. The cofactor is Mg(2+).

It is found in the cytoplasm. An essential GTPase which binds GTP, GDP and possibly (p)ppGpp with moderate affinity, with high nucleotide exchange rates and a fairly low GTP hydrolysis rate. Plays a role in control of the cell cycle, stress response, ribosome biogenesis and in those bacteria that undergo differentiation, in morphogenesis control. This chain is GTPase Obg, found in Shewanella pealeana (strain ATCC 700345 / ANG-SQ1).